A 629-amino-acid chain; its full sequence is ATP-dependent RNA helicase DeaD (629 aa).

The Q motif signature appears at 6–34 (TTFADLGLKAPILEALNDLGYEKPSPIQA). A Helicase ATP-binding domain is found at 37-208 (IPHLLNGRDV…RRFMKEPQEV (172 aa)). 50 to 57 (AQTGSGKT) lines the ATP pocket. The DEAD box signature appears at 156 to 159 (DEAD). The Helicase C-terminal domain maps to 232-379 (KNEALVRFLE…EVELPNAELL (148 aa)). 2 disordered regions span residues 438–481 (LIVP…RERR) and 560–629 (LGDA…GGDA). 2 stretches are compositionally biased toward basic and acidic residues: residues 446 to 481 (MRPKREFRDRDDRGPRDRNDRGPRGDREDRPRRERR) and 568 to 629 (GGER…GGDA).

Belongs to the DEAD box helicase family. DeaD/CsdA subfamily. As to quaternary structure, interacts with the 50S ribosomal subunit upon shifting to 15 degrees Celsius. Also found associated with the RNA degradosome at 15 degrees Celsius; binds RNase E (rne).

The protein localises to the cytoplasm. The catalysed reaction is ATP + H2O = ADP + phosphate + H(+). In terms of biological role, DEAD-box RNA helicase involved in various cellular processes at low temperature, including ribosome biogenesis, mRNA degradation and translation initiation. Exhibits RNA-stimulated ATP hydrolysis and RNA unwinding activity at low temperature. Involved in 50S ribosomal subunit assembly, acting after SrmB, and could also play a role in the biogenesis of the 30S ribosomal subunit. In addition, is involved in mRNA decay, via formation of a cold-shock degradosome with RNase E. Also stimulates translation of some mRNAs, probably at the level of initiation. The sequence is that of ATP-dependent RNA helicase DeaD from Escherichia coli (strain K12).